A 517-amino-acid polypeptide reads, in one-letter code: Maturase K (517 aa).

This sequence belongs to the intron maturase 2 family. MatK subfamily.

The protein localises to the plastid. It is found in the chloroplast. In terms of biological role, usually encoded in the trnK tRNA gene intron. Probably assists in splicing its own and other chloroplast group II introns. This is Maturase K from Dracula chimaera.